The following is a 629-amino-acid chain: MHFHERFDVIVVGGGHAGTEAALAAARMGSKTLLLTHNLDTLGQMSCNPAIGGIGKGHLVKEIDALGGAMAIATDYAGIQFRTLNSSKGPAVRATRAQADRALYRQKIQNILQNQPNLRIFQQAVDDLVVENDRVVGVITQMGLAFEAPAVVLTAGTFLSGKIHIGLENYSGGRAGDPPSIALAHRLRELPIRVGRLKTGTPPRIDANTIDFTQMTEQKGDTPLPVMSFMGDVSHHPKQISCWITHTNEKTHDIIRGGLDRSPMYSGVIEGIGPRYCPSIEDKIHRFSDKSSHQIFIEPEGLNTNEIYPNGISTSLPFDVQLNLVRSIQGMENAEIVRPGYAIEYDYFDPRDLKNSLETKTINGLFFAGQINGTTGYEEAGAQGLLAGMNAALQVQGKEAWCPRRDEAYIGVLVDDLSTLGTKEPYRMFTSRAEYRLLLREDNADLRLTAKGRELGLVDDARWASFSEKLESIELELQRLRSQWIHPNSPLVPVLNPHLNTPISREASFEELLRRPEMDYSKLMQIEGFGPGLADPLAAEQVQIQVKYSGYIQRQQEEINKAVRNENTGLPLNLDYKEVPGLSNEVIAKLNSHKPETIGQASRISGITPAAISILLVHLKKRGLLRKSA.

Residues 13–18 (GGGHAG), valine 125, and serine 180 each bind FAD. NAD(+) is bound at residue 273 to 287 (GPRYCPSIEDKIHRF). Glutamine 370 serves as a coordination point for FAD.

The protein belongs to the MnmG family. In terms of assembly, homodimer. Heterotetramer of two MnmE and two MnmG subunits. The cofactor is FAD.

The protein localises to the cytoplasm. NAD-binding protein involved in the addition of a carboxymethylaminomethyl (cmnm) group at the wobble position (U34) of certain tRNAs, forming tRNA-cmnm(5)s(2)U34. The sequence is that of tRNA uridine 5-carboxymethylaminomethyl modification enzyme MnmG from Shewanella sp. (strain MR-7).